The sequence spans 179 residues: Bifunctional protein PyrR (179 aa).

The short motif at 97–109 (IILTDDVLYTGRT) is the PRPP-binding element.

This sequence belongs to the purine/pyrimidine phosphoribosyltransferase family. PyrR subfamily.

The catalysed reaction is UMP + diphosphate = 5-phospho-alpha-D-ribose 1-diphosphate + uracil. Its function is as follows. Regulates the transcription of the pyrimidine nucleotide (pyr) operon in response to exogenous pyrimidines. In terms of biological role, also displays a weak uracil phosphoribosyltransferase activity which is not physiologically significant. The protein is Bifunctional protein PyrR of Elusimicrobium minutum (strain Pei191).